Here is a 307-residue protein sequence, read N- to C-terminus: GTPase Era (307 aa).

Residues 17 to 186 (RCGFVAIVGR…LELLKPYLPE (170 aa)) enclose the Era-type G domain. The tract at residues 25–32 (GRPNVGKS) is G1. 25 to 32 (GRPNVGKS) contributes to the GTP binding site. The G2 stretch occupies residues 51 to 55 (QTTRN). A G3 region spans residues 72-75 (DTPG). Residues 72–76 (DTPGF) and 133–136 (NKID) contribute to the GTP site. Residues 133–136 (NKID) form a G4 region. A G5 region spans residues 165 to 167 (VSA). Positions 217–293 (LGEELPYAMN…FLKVWVKVKS (77 aa)) constitute a KH type-2 domain.

The protein belongs to the TRAFAC class TrmE-Era-EngA-EngB-Septin-like GTPase superfamily. Era GTPase family. As to quaternary structure, monomer.

The protein resides in the cytoplasm. Its subcellular location is the cell inner membrane. Functionally, an essential GTPase that binds both GDP and GTP, with rapid nucleotide exchange. Plays a role in 16S rRNA processing and 30S ribosomal subunit biogenesis and possibly also in cell cycle regulation and energy metabolism. This Neisseria meningitidis serogroup C / serotype 2a (strain ATCC 700532 / DSM 15464 / FAM18) protein is GTPase Era.